Here is a 284-residue protein sequence, read N- to C-terminus: 4-hydroxybenzoate octaprenyltransferase (284 aa).

The next 7 helical transmembrane spans lie at 13–32 (FNRP…ALWL), 90–110 (ALML…FTDL), 112–132 (TILL…MKRY), 134–154 (HLPQ…AYSA), 164–184 (LWML…YYAM), 200–220 (ILFG…TLSL), and 224–244 (IGLL…CVGL).

This sequence belongs to the UbiA prenyltransferase family. Mg(2+) is required as a cofactor.

It is found in the cell inner membrane. It catalyses the reaction all-trans-octaprenyl diphosphate + 4-hydroxybenzoate = 4-hydroxy-3-(all-trans-octaprenyl)benzoate + diphosphate. It functions in the pathway cofactor biosynthesis; ubiquinone biosynthesis. Its function is as follows. Catalyzes the prenylation of para-hydroxybenzoate (PHB) with an all-trans polyprenyl group. Mediates the second step in the final reaction sequence of ubiquinone-8 (UQ-8) biosynthesis, which is the condensation of the polyisoprenoid side chain with PHB, generating the first membrane-bound Q intermediate 3-octaprenyl-4-hydroxybenzoate. This is 4-hydroxybenzoate octaprenyltransferase from Marinomonas sp. (strain MWYL1).